The sequence spans 152 residues: MTHSVQLKILDKRLGSEFPLPAYATKGSAGLDLRACLDEPLKIEPDETCLISTGLAIYLGHSNVAATILPRSGLGHKHGIVLGNLVGLIDSDYQGPLMVSCWNRGKEPYTINPGDRIAQLVVLPILKAQFAVVEEFELTERGAGGFGSSGQN.

Residues arginine 71–glycine 73, asparagine 84, leucine 88–aspartate 90, and methionine 98 contribute to the substrate site.

The protein belongs to the dUTPase family. Requires Mg(2+) as cofactor.

It catalyses the reaction dUTP + H2O = dUMP + diphosphate + H(+). Its pathway is pyrimidine metabolism; dUMP biosynthesis; dUMP from dCTP (dUTP route): step 2/2. This enzyme is involved in nucleotide metabolism: it produces dUMP, the immediate precursor of thymidine nucleotides and it decreases the intracellular concentration of dUTP so that uracil cannot be incorporated into DNA. This is Deoxyuridine 5'-triphosphate nucleotidohydrolase from Coxiella burnetii (strain Dugway 5J108-111).